We begin with the raw amino-acid sequence, 572 residues long: Probable transporter MCH1 (572 aa).

Residues 1-29 (MSSSAPDDTQASRLDADQISTRSSSYASD) show a composition bias toward polar residues. Residues 1–39 (MSSSAPDDTQASRLDADQISTRSSSYASDNDTDSTETRI) are disordered. Asn-30 carries an N-linked (GlcNAc...) asparagine glycan. The next 10 membrane-spanning stretches (helical) occupy residues 50-70 (LLAF…VVFS), 89-109 (AVAI…GYIC), 116-136 (PLAL…AGVY), 159-179 (FLML…MAAV), 193-213 (GLAL…LSQA), 232-252 (VFRF…LGTF), 335-355 (LAFL…GTII), 426-446 (FMAF…SGLV), 459-479 (LVGA…TIIW), and 488-508 (YGLI…VYSA). N-linked (GlcNAc...) asparagine glycosylation is present at Asn-515. A helical membrane pass occupies residues 539-559 (PTYWAETITVWIAVGLLLWAW).

Belongs to the major facilitator superfamily.

The protein localises to the vacuole membrane. Functionally, probable transporter. In Gibberella zeae (strain ATCC MYA-4620 / CBS 123657 / FGSC 9075 / NRRL 31084 / PH-1) (Wheat head blight fungus), this protein is Probable transporter MCH1 (MCH1).